Reading from the N-terminus, the 508-residue chain is Erythropoietin receptor (508 aa).

The N-terminal stretch at M1–W24 is a signal peptide. The Extracellular segment spans residues A25–P250. C52 and C62 are joined by a disulfide. N-linked (GlcNAc...) asparagine glycosylation is present at N76. A disulfide bridge links C91 with C107. The region spanning P148–D247 is the Fibronectin type-III domain. N-linked (GlcNAc...) asparagine glycosylation is present at N184. The WSXWS motif signature appears at W233–S237. The helical transmembrane segment at L251–S273 threads the bilayer. Topologically, residues H274–S508 are cytoplasmic. Residue K281 forms a Glycyl lysine isopeptide (Lys-Gly) (interchain with G-Cter in ubiquitin) linkage. The short motif at I282 to E290 is the Box 1 motif element. Residues Y368 and Y426 each carry the phosphotyrosine; by JAK2 modification. Residues I452–L457 carry the ITIM motif motif. K453 is covalently cross-linked (Glycyl lysine isopeptide (Lys-Gly) (interchain with G-Cter in ubiquitin)). Phosphotyrosine; by JAK2 occurs at positions 454, 456, 468, 489, and 504. The interval D467–S508 is disordered.

Belongs to the type I cytokine receptor family. Type 1 subfamily. In terms of assembly, forms homodimers on EPO stimulation. The tyrosine-phosphorylated form interacts with several SH2 domain-containing proteins including LYN, the adapter protein SH2B2, PTPN6, PTPN11, JAK2, PI3 kinases, STAT5A/B, SOCS3, CRKL. Interacts with INPP5D/SHIP1. SH2B2 binding inhibits the JAK-STAT signaling. Interacts with RHEX; this interaction occurs in a erythropoietin (EPO)-dependent manner. Interacts with ATXN2L. In terms of processing, on EPO stimulation, phosphorylated on C-terminal tyrosine residues by JAK2. The phosphotyrosine motifs are also recruitment sites for several SH2-containing proteins and adapter proteins which mediate cell proliferation. Phosphorylation on Tyr-454 is required for PTPN6 interaction, Tyr-426 for PTPN11. Tyr-426 is also required for SOCS3 binding, but Tyr-454/Tyr-456 motif is the preferred binding site. Post-translationally, ubiquitinated by the ECS(SOCS2) complex following ligand-binding and phosphorylation by JAK2, leading to its degradation by the proteasome. Regulation by the ECS(SOCS2) complex acts as a negative feedback loop of erythropoietin-mediated signaling pathway. Ubiquitination at Lys-281 mediates receptor internalization, whereas ubiquitination at Lys-453 promotes trafficking of activated receptors to the lysosomes for degradation. Ubiquitinated by NOSIP; appears to be either multi-monoubiquitinated or polyubiquitinated. Ubiquitination mediates proliferation and survival of EPO-dependent cells.

It is found in the cell membrane. Functionally, receptor for erythropoietin, which mediates erythropoietin-induced erythroblast proliferation and differentiation. Upon EPO stimulation, EPOR dimerizes triggering the JAK2/STAT5 signaling cascade. In some cell types, can also activate STAT1 and STAT3. May also activate the LYN tyrosine kinase. Its function is as follows. Isoform EPOR-T acts as a dominant-negative receptor of EPOR-mediated signaling. The chain is Erythropoietin receptor (EPOR) from Canis lupus familiaris (Dog).